Consider the following 113-residue polypeptide: Mediator of RNA polymerase II transcription subunit 11 (113 aa).

The protein belongs to the Mediator complex subunit 11 family. As to quaternary structure, component of the Mediator complex.

It localises to the nucleus. Its function is as follows. Component of the Mediator complex, a coactivator involved in the regulated transcription of nearly all RNA polymerase II-dependent genes. Mediator functions as a bridge to convey information from gene-specific regulatory proteins to the basal RNA polymerase II transcription machinery. Mediator is recruited to promoters by direct interactions with regulatory proteins and serves as a scaffold for the assembly of a functional pre-initiation complex with RNA polymerase II and the general transcription factors. The sequence is that of Mediator of RNA polymerase II transcription subunit 11 (MED11) from Eremothecium gossypii (strain ATCC 10895 / CBS 109.51 / FGSC 9923 / NRRL Y-1056) (Yeast).